We begin with the raw amino-acid sequence, 401 residues long: Probable tRNA sulfurtransferase (401 aa).

The region spanning Glu60–Asp165 is the THUMP domain. Residues Met183–Leu184, His208–Phe209, Arg265, Gly287, and Gln296 contribute to the ATP site.

Belongs to the ThiI family.

It is found in the cytoplasm. The catalysed reaction is [ThiI sulfur-carrier protein]-S-sulfanyl-L-cysteine + a uridine in tRNA + 2 reduced [2Fe-2S]-[ferredoxin] + ATP + H(+) = [ThiI sulfur-carrier protein]-L-cysteine + a 4-thiouridine in tRNA + 2 oxidized [2Fe-2S]-[ferredoxin] + AMP + diphosphate. The enzyme catalyses [ThiS sulfur-carrier protein]-C-terminal Gly-Gly-AMP + S-sulfanyl-L-cysteinyl-[cysteine desulfurase] + AH2 = [ThiS sulfur-carrier protein]-C-terminal-Gly-aminoethanethioate + L-cysteinyl-[cysteine desulfurase] + A + AMP + 2 H(+). It functions in the pathway cofactor biosynthesis; thiamine diphosphate biosynthesis. Its function is as follows. Catalyzes the ATP-dependent transfer of a sulfur to tRNA to produce 4-thiouridine in position 8 of tRNAs, which functions as a near-UV photosensor. Also catalyzes the transfer of sulfur to the sulfur carrier protein ThiS, forming ThiS-thiocarboxylate. This is a step in the synthesis of thiazole, in the thiamine biosynthesis pathway. The sulfur is donated as persulfide by IscS. The polypeptide is Probable tRNA sulfurtransferase (Bacillus subtilis (strain 168)).